The chain runs to 745 residues: uncharacterized protein (745 aa).

Positions Asn158–Asp256 constitute an HTH araC/xylS-type domain. 2 DNA-binding regions (H-T-H motif) span residues Ser175 to Leu196 and Ile223 to Thr246.

This is an uncharacterized protein from Staphylococcus aureus (strain Mu50 / ATCC 700699).